The primary structure comprises 162 residues: NADH-quinone oxidoreductase subunit I 2 (162 aa).

2 consecutive 4Fe-4S ferredoxin-type domains span residues 52 to 82 (LRRYPNGEERCIACKLCEAVCPAQAITIEAG) and 93 to 122 (ERYDIDMVKCIYCGLCQEACPVDAIVEGPN). Residues Cys-62, Cys-65, Cys-68, Cys-72, Cys-102, Cys-105, Cys-108, and Cys-112 each coordinate [4Fe-4S] cluster.

It belongs to the complex I 23 kDa subunit family. NDH-1 is composed of 14 different subunits. Subunits NuoA, H, J, K, L, M, N constitute the membrane sector of the complex. [4Fe-4S] cluster is required as a cofactor.

It localises to the cell inner membrane. The enzyme catalyses a quinone + NADH + 5 H(+)(in) = a quinol + NAD(+) + 4 H(+)(out). Its function is as follows. NDH-1 shuttles electrons from NADH, via FMN and iron-sulfur (Fe-S) centers, to quinones in the respiratory chain. The immediate electron acceptor for the enzyme in this species is believed to be ubiquinone. Couples the redox reaction to proton translocation (for every two electrons transferred, four hydrogen ions are translocated across the cytoplasmic membrane), and thus conserves the redox energy in a proton gradient. This Rhodopseudomonas palustris (strain BisA53) protein is NADH-quinone oxidoreductase subunit I 2.